The sequence spans 102 residues: Putative defensin-like protein 152 (102 aa).

A signal peptide spans 1 to 29 (MKKASQLSTTILTIFIVLAIGMMVKGTVG). Disulfide bonds link cysteine 34–cysteine 93, cysteine 51–cysteine 71, cysteine 56–cysteine 87, and cysteine 60–cysteine 89.

It belongs to the DEFL family.

The protein resides in the secreted. The protein is Putative defensin-like protein 152 (LCR11) of Arabidopsis thaliana (Mouse-ear cress).